The primary structure comprises 378 residues: MATVIHNPLKALGDQFYKEAIEHCRSYNSRLCAERSVRLPFLDSQTGVAQNNCYIWMEKRHRGPGLAPGQLYTYPARCWRKKRRLHPPEDPKLRLLEIKPEVELPLKKDGFTSESTTLEALLRGEGVEKKVDAREEESIQEIQRVLENDENVEEGNEEEDLEEDVPKRKNRTRGRARGSAGGRRRHDAASQEDHDKPYVCDICGKRYKNRPGLSYHYAHTHLASEEGDEAQDQETRSPPNHRNENHRPQKGPDGTVIPNNYCDFCLGGSNMNKKSGRPEELVSCADCGRSGHPTCLQFTLNMTEAVKTYKWQCIECKSCILCGTSENDDQLLFCDDCDRGYHMYCLNPPVAEPPEGSWSCHLCWELLKEKASAFGCQA.

Lys-99 is covalently cross-linked (Glycyl lysine isopeptide (Lys-Gly) (interchain with G-Cter in SUMO2)). A disordered region spans residues 146–193; the sequence is LENDENVEEGNEEEDLEEDVPKRKNRTRGRARGSAGGRRRHDAASQED. Over residues 148–163 the composition is skewed to acidic residues; the sequence is NDENVEEGNEEEDLEE. Positions 168–186 are enriched in basic residues; sequence RKNRTRGRARGSAGGRRRH. Residues 198-221 form a C2H2-type zinc finger; sequence YVCDICGKRYKNRPGLSYHYAHTH. The disordered stretch occupies residues 225–254; that stretch reads EEGDEAQDQETRSPPNHRNENHRPQKGPDG. 2 PHD-type zinc fingers span residues 259–319 and 316–366; these read NNYC…CKSC and CKSC…CWEL. The tract at residues 317–332 is interaction with HDGFL2; that stretch reads KSCILCGTSENDDQLL. Gly-323 bears the Phosphoserine mark.

It belongs to the requiem/DPF family. In terms of assembly, component of the BAF complex, which includes at least actin (ACTB), ARID1A, ARID1B/BAF250, SMARCA2, SMARCA4/BRG1/BAF190A, ACTL6A/BAF53, ACTL6B/BAF53B, SMARCE1/BAF57, SMARCC1/BAF155, SMARCC2/BAF170, SMARCB1/SNF5/INI1, and one or more of SMARCD1/BAF60A, SMARCD2/BAF60B, or SMARCD3/BAF60C. In muscle cells, the BAF complex also contains DPF3. Interacts with acetylated histones H3 and H4. Component of neuron-specific chromatin remodeling complex (nBAF complex) composed of at least, ARID1A/BAF250A or ARID1B/BAF250B, SMARCD1/BAF60A, SMARCD3/BAF60C, SMARCA2/BRM/BAF190B, SMARCA4/BRG1/BAF190A, SMARCB1/BAF47, SMARCC1/BAF155, SMARCE1/BAF57, SMARCC2/BAF170, DPF1/BAF45B, DPF3/BAF45C, ACTL6B/BAF53B and actin. Interacts with HDGFL2. Interacts with SMARCA4/BRG1/BAF190A, SMARCC1/BAF155 and SMARCD1/BAF60A. Expressed in the heart and somites. Expressed in cerebellum and spinal cord, but not in cerebral cortex. Expressed specifically in post-mitotic neurons (at protein level).

Its subcellular location is the nucleus. In terms of biological role, muscle-specific component of the BAF complex, a multiprotein complex involved in transcriptional activation and repression of select genes by chromatin remodeling (alteration of DNA-nucleosome topology). Specifically binds acetylated lysines on histone 3 and 4 (H3K14ac, H3K9ac, H4K5ac, H4K8ac, H4K12ac, H4K16ac). In the complex, it acts as a tissue-specific anchor between histone acetylations and methylations and chromatin remodeling. It thereby probably plays an essential role in heart and skeletal muscle development. Belongs to the neuron-specific chromatin remodeling complex (nBAF complex). During neural development a switch from a stem/progenitor to a post-mitotic chromatin remodeling mechanism occurs as neurons exit the cell cycle and become committed to their adult state. The transition from proliferating neural stem/progenitor cells to post-mitotic neurons requires a switch in subunit composition of the npBAF and nBAF complexes. As neural progenitors exit mitosis and differentiate into neurons, npBAF complexes which contain ACTL6A/BAF53A and PHF10/BAF45A, are exchanged for homologous alternative ACTL6B/BAF53B and DPF1/BAF45B or DPF3/BAF45C subunits in neuron-specific complexes (nBAF). The npBAF complex is essential for the self-renewal/proliferative capacity of the multipotent neural stem cells. The nBAF complex along with CREST plays a role regulating the activity of genes essential for dendrite growth. Functionally, acts as a regulator of myogenesis in cooperation with HDGFL2. Mediates the interaction of HDGFL2 with the BAF complex. HDGFL2-DPF3a activate myogenic genes by increasing chromatin accessibility through recruitment of SMARCA4/BRG1/BAF190A (ATPase subunit of the BAF complex) to myogenic gene promoters. In Mus musculus (Mouse), this protein is Zinc finger protein DPF3 (Dpf3).